Here is a 309-residue protein sequence, read N- to C-terminus: Dihydroorotate dehydrogenase B (NAD(+)), catalytic subunit (309 aa).

FMN is bound by residues Ser21 and 45–46 (KA). Substrate-binding positions include Lys45 and 69-73 (NAIGL). Positions 99 and 127 each coordinate FMN. Position 127 (Asn127) interacts with substrate. The Nucleophile role is filled by Cys130. Residues Lys165 and Ile191 each contribute to the FMN site. 192–193 (NT) provides a ligand contact to substrate. Residues Gly217, 243–244 (GG), and 265–266 (GT) contribute to the FMN site.

The protein belongs to the dihydroorotate dehydrogenase family. Type 1 subfamily. As to quaternary structure, heterotetramer of 2 PyrK and 2 PyrD type B subunits. Requires FMN as cofactor.

It localises to the cytoplasm. The catalysed reaction is (S)-dihydroorotate + NAD(+) = orotate + NADH + H(+). It functions in the pathway pyrimidine metabolism; UMP biosynthesis via de novo pathway; orotate from (S)-dihydroorotate (NAD(+) route): step 1/1. Its function is as follows. Catalyzes the conversion of dihydroorotate to orotate with NAD(+) as electron acceptor. The protein is Dihydroorotate dehydrogenase B (NAD(+)), catalytic subunit (pyrD) of Bacillus mycoides (strain KBAB4) (Bacillus weihenstephanensis).